Reading from the N-terminus, the 298-residue chain is Lipoyl synthase (298 aa).

Residues C40, C45, C51, C67, C71, C74, and S280 each contribute to the [4Fe-4S] cluster site. The region spanning 53 to 269 (AVRRTATFMI…KEIAMQKGFS (217 aa)) is the Radical SAM core domain.

It belongs to the radical SAM superfamily. Lipoyl synthase family. [4Fe-4S] cluster is required as a cofactor.

It localises to the cytoplasm. It catalyses the reaction [[Fe-S] cluster scaffold protein carrying a second [4Fe-4S](2+) cluster] + N(6)-octanoyl-L-lysyl-[protein] + 2 oxidized [2Fe-2S]-[ferredoxin] + 2 S-adenosyl-L-methionine + 4 H(+) = [[Fe-S] cluster scaffold protein] + N(6)-[(R)-dihydrolipoyl]-L-lysyl-[protein] + 4 Fe(3+) + 2 hydrogen sulfide + 2 5'-deoxyadenosine + 2 L-methionine + 2 reduced [2Fe-2S]-[ferredoxin]. It functions in the pathway protein modification; protein lipoylation via endogenous pathway; protein N(6)-(lipoyl)lysine from octanoyl-[acyl-carrier-protein]. Catalyzes the radical-mediated insertion of two sulfur atoms into the C-6 and C-8 positions of the octanoyl moiety bound to the lipoyl domains of lipoate-dependent enzymes, thereby converting the octanoylated domains into lipoylated derivatives. This is Lipoyl synthase from Bacillus subtilis (strain 168).